A 263-amino-acid polypeptide reads, in one-letter code: Hydroxyethylthiazole kinase 1 (263 aa).

Met42 contacts substrate. The ATP site is built by Lys118 and Thr164. Gly191 is a binding site for substrate.

Belongs to the Thz kinase family. The cofactor is Mg(2+).

The catalysed reaction is 5-(2-hydroxyethyl)-4-methylthiazole + ATP = 4-methyl-5-(2-phosphooxyethyl)-thiazole + ADP + H(+). Its pathway is cofactor biosynthesis; thiamine diphosphate biosynthesis; 4-methyl-5-(2-phosphoethyl)-thiazole from 5-(2-hydroxyethyl)-4-methylthiazole: step 1/1. Functionally, catalyzes the phosphorylation of the hydroxyl group of 4-methyl-5-beta-hydroxyethylthiazole (THZ). In Clostridium botulinum (strain Okra / Type B1), this protein is Hydroxyethylthiazole kinase 1.